Reading from the N-terminus, the 570-residue chain is Formate--tetrahydrofolate ligase (570 aa).

Position 65–72 (65–72 (TPLGEGKT)) interacts with ATP.

It belongs to the formate--tetrahydrofolate ligase family.

The enzyme catalyses (6S)-5,6,7,8-tetrahydrofolate + formate + ATP = (6R)-10-formyltetrahydrofolate + ADP + phosphate. It functions in the pathway one-carbon metabolism; tetrahydrofolate interconversion. In Herpetosiphon aurantiacus (strain ATCC 23779 / DSM 785 / 114-95), this protein is Formate--tetrahydrofolate ligase.